A 209-amino-acid chain; its full sequence is Protease (209 aa).

Catalysis depends on residues His-55, Asp-72, and Cys-123.

This sequence belongs to the peptidase C5 family. As to quaternary structure, interacts with protease cofactor pVI-C; this interaction is necessary for protease activation.

It localises to the virion. Its subcellular location is the host nucleus. It catalyses the reaction Cleaves proteins of the adenovirus and its host cell at two consensus sites: -Yaa-Xaa-Gly-Gly-|-Xaa- and -Yaa-Xaa-Gly-Xaa-|-Gly- (in which Yaa is Met, Ile or Leu, and Xaa is any amino acid).. Requires DNA and protease cofactor for maximal activation. Inside nascent virions, becomes partially activated by binding to the viral DNA, allowing it to cleave the cofactor that binds to the protease and fully activates it. Actin, like the viral protease cofactor, seems to act as a cofactor in the cleavage of cytokeratin 18 and of actin itself. Cleaves viral precursor proteins (pTP, pIIIa, pVI, pVII, pVIII, and pX) inside newly assembled particles giving rise to mature virions. Protease complexed to its cofactor slides along the viral DNA to specifically locate and cleave the viral precursors. Mature virions have a weakened organization compared to the unmature virions, thereby facilitating subsequent uncoating. Without maturation, the particle lacks infectivity and is unable to uncoat. Late in adenovirus infection, in the cytoplasm, may participate in the cytoskeleton destruction. Cleaves host cell cytoskeletal keratins K7 and K18. This Human adenovirus D serotype 17 (HAdV-17) protein is Protease.